Reading from the N-terminus, the 657-residue chain is UvrABC system protein B (657 aa).

A Helicase ATP-binding domain is found at 23 to 414; it reads KSIKKGNKYQ…KENIFHQIMR (392 aa). An ATP-binding site is contributed by 36–43; the sequence is GVTGSGKT. Positions 89–112 match the Beta-hairpin motif; the sequence is YYDYYQPEAYIPRTDVFIEKDSST. A Helicase C-terminal domain is found at 431–593; that stretch reads QVEILFDEAK…ITPTSVKRHI (163 aa). Residues 622–657 enclose the UVR domain; it reads AKLAKELRKQMLEAAKALEFEKAAAIRDEINKLRDL.

Belongs to the UvrB family. In terms of assembly, forms a heterotetramer with UvrA during the search for lesions. Interacts with UvrC in an incision complex.

The protein resides in the cytoplasm. The UvrABC repair system catalyzes the recognition and processing of DNA lesions. A damage recognition complex composed of 2 UvrA and 2 UvrB subunits scans DNA for abnormalities. Upon binding of the UvrA(2)B(2) complex to a putative damaged site, the DNA wraps around one UvrB monomer. DNA wrap is dependent on ATP binding by UvrB and probably causes local melting of the DNA helix, facilitating insertion of UvrB beta-hairpin between the DNA strands. Then UvrB probes one DNA strand for the presence of a lesion. If a lesion is found the UvrA subunits dissociate and the UvrB-DNA preincision complex is formed. This complex is subsequently bound by UvrC and the second UvrB is released. If no lesion is found, the DNA wraps around the other UvrB subunit that will check the other stand for damage. In Campylobacter jejuni (strain RM1221), this protein is UvrABC system protein B.